We begin with the raw amino-acid sequence, 187 residues long: Cytochrome c oxidase assembly protein CtaG (187 aa).

Topologically, residues 1-9 (MSKKSNKNL) are cytoplasmic. A helical; Signal-anchor for type II membrane protein membrane pass occupies residues 10-30 (AFSLLGLIISMVLLSFASVPI). Topologically, residues 31 to 187 (YNLFCKVTGY…IASLRGNTKY (157 aa)) are periplasmic.

The protein belongs to the COX11/CtaG family.

The protein localises to the cell inner membrane. Exerts its effect at some terminal stage of cytochrome c oxidase synthesis, probably by being involved in the insertion of the copper B into subunit I. In Rickettsia felis (strain ATCC VR-1525 / URRWXCal2) (Rickettsia azadi), this protein is Cytochrome c oxidase assembly protein CtaG.